A 620-amino-acid chain; its full sequence is Probable indole-3-acetic acid-amido synthetase GH3.7 (620 aa).

The protein belongs to the IAA-amido conjugating enzyme family. Ubiquitous.

Functionally, may catalyze the synthesis of indole-3-acetic acid (IAA)-amino acid conjugates, providing a mechanism for the plant to cope with the presence of excess auxin. The chain is Probable indole-3-acetic acid-amido synthetase GH3.7 (GH3.7) from Oryza sativa subsp. japonica (Rice).